The following is a 539-amino-acid chain: Chaperonin GroEL 2 (539 aa).

Residues 29–32, 86–90, glycine 414, 479–481, and aspartate 495 contribute to the ATP site; these read TIGP, DGTTT, and DAL.

It belongs to the chaperonin (HSP60) family. In terms of assembly, forms a cylinder of 14 subunits composed of two heptameric rings stacked back-to-back. Interacts with the co-chaperonin GroES.

The protein resides in the cytoplasm. It carries out the reaction ATP + H2O + a folded polypeptide = ADP + phosphate + an unfolded polypeptide.. Functionally, together with its co-chaperonin GroES, plays an essential role in assisting protein folding. The GroEL-GroES system forms a nano-cage that allows encapsulation of the non-native substrate proteins and provides a physical environment optimized to promote and accelerate protein folding. The chain is Chaperonin GroEL 2 from Synechococcus sp. (strain JA-2-3B'a(2-13)) (Cyanobacteria bacterium Yellowstone B-Prime).